The sequence spans 370 residues: Putative agmatine deiminase (370 aa).

The active-site Amidino-cysteine intermediate is the Cys-361.

Belongs to the agmatine deiminase family.

It carries out the reaction agmatine + H2O = N-carbamoylputrescine + NH4(+). The chain is Putative agmatine deiminase from Shewanella baltica (strain OS195).